The chain runs to 412 residues: Serine hydroxymethyltransferase (412 aa).

Residues leucine 117 and 121–123 (GHL) contribute to the (6S)-5,6,7,8-tetrahydrofolate site. The residue at position 226 (lysine 226) is an N6-(pyridoxal phosphate)lysine.

This sequence belongs to the SHMT family. In terms of assembly, homodimer. The cofactor is pyridoxal 5'-phosphate.

It is found in the cytoplasm. The catalysed reaction is (6R)-5,10-methylene-5,6,7,8-tetrahydrofolate + glycine + H2O = (6S)-5,6,7,8-tetrahydrofolate + L-serine. Its pathway is one-carbon metabolism; tetrahydrofolate interconversion. It participates in amino-acid biosynthesis; glycine biosynthesis; glycine from L-serine: step 1/1. Its function is as follows. Catalyzes the reversible interconversion of serine and glycine with tetrahydrofolate (THF) serving as the one-carbon carrier. This reaction serves as the major source of one-carbon groups required for the biosynthesis of purines, thymidylate, methionine, and other important biomolecules. Also exhibits THF-independent aldolase activity toward beta-hydroxyamino acids, producing glycine and aldehydes, via a retro-aldol mechanism. The sequence is that of Serine hydroxymethyltransferase from Staphylococcus aureus (strain USA300).